The sequence spans 306 residues: Glutaminase (306 aa).

The substrate site is built by Ser-64, Asn-115, Glu-159, Asn-166, Tyr-190, Tyr-242, and Val-260.

This sequence belongs to the glutaminase family. In terms of assembly, homotetramer.

It carries out the reaction L-glutamine + H2O = L-glutamate + NH4(+). This Photobacterium profundum (strain SS9) protein is Glutaminase.